We begin with the raw amino-acid sequence, 215 residues long: Probable transaldolase (215 aa).

Lys83 serves as the catalytic Schiff-base intermediate with substrate.

The protein belongs to the transaldolase family. Type 3B subfamily.

It is found in the cytoplasm. It carries out the reaction D-sedoheptulose 7-phosphate + D-glyceraldehyde 3-phosphate = D-erythrose 4-phosphate + beta-D-fructose 6-phosphate. It participates in carbohydrate degradation; pentose phosphate pathway; D-glyceraldehyde 3-phosphate and beta-D-fructose 6-phosphate from D-ribose 5-phosphate and D-xylulose 5-phosphate (non-oxidative stage): step 2/3. Transaldolase is important for the balance of metabolites in the pentose-phosphate pathway. In Clostridium perfringens (strain ATCC 13124 / DSM 756 / JCM 1290 / NCIMB 6125 / NCTC 8237 / Type A), this protein is Probable transaldolase.